The following is a 420-amino-acid chain: Synaptosomal-associated protein 47 (420 aa).

T-SNARE coiled-coil homology domains follow at residues 110-172 (AEAA…LTEL) and 357-419 (TSEP…MKKL). The segment at 338 to 357 (ATHCEPSSGSQEGRPLQLQT) is disordered. The span at 342–357 (EPSSGSQEGRPLQLQT) shows a compositional bias: polar residues.

Belongs to the SVAP1 family. In terms of assembly, forms a complex containing SNAP47, VAMP2 and STX1A. Associates with the BLOC-1 complex. Interacts with BLOC1S6.

The protein resides in the endomembrane system. It is found in the cytoplasm. It localises to the perinuclear region. In terms of biological role, may play a role in intracellular membrane fusion. The protein is Synaptosomal-associated protein 47 (SNAP47) of Bos taurus (Bovine).